Reading from the N-terminus, the 84-residue chain is Hepcidin (84 aa).

Positions 1 to 24 (MALSSQIWAACLLLLLLLASLTSG) are cleaved as a signal peptide. Residues 25-54 (SVFPQQTGQLAELQPQDRAGARAGWTPMLQ) constitute a propeptide that is removed on maturation. 3 cysteine pairs are disulfide-bonded: cysteine 69–cysteine 72, cysteine 70–cysteine 78, and cysteine 73–cysteine 81.

Belongs to the hepcidin family. Interacts with SLC40A1; this interaction promotes SLC40A1 rapid ubiquitination.

It localises to the secreted. Its function is as follows. Liver-produced hormone that constitutes the main circulating regulator of iron absorption and distribution across tissues. Acts by promoting endocytosis and degradation of ferroportin/SLC40A1, leading to the retention of iron in iron-exporting cells and decreased flow of iron into plasma. Controls the major flows of iron into plasma: absorption of dietary iron in the intestine, recycling of iron by macrophages, which phagocytose old erythrocytes and other cells, and mobilization of stored iron from hepatocytes. Has strong antimicrobial activity against E.coli ML35P N.cinerea and weaker against S.epidermidis, S.aureus and group b streptococcus bacteria. Active against the fungus C.albicans. No activity against P.aeruginosa. This is Hepcidin (HAMP) from Pongo abelii (Sumatran orangutan).